The sequence spans 347 residues: Gentisate 1,2 dioxygenase 1 (347 aa).

The Cupin type-2 domain maps to leucine 96–aspartate 163.

Belongs to the gentisate 1,2-dioxygenase family. As to quaternary structure, homotetramer. The cofactor is Fe(2+).

The enzyme catalyses 2,5-dihydroxybenzoate + O2 = 3-maleylpyruvate + H(+). With respect to regulation, completely inhibited by the presence of 5 mM Cu(2+). Partially inhibited with 5 mM Mn(2+), Zn(2+) or EDTA. Its function is as follows. Involved in the degradation of gentisate. Catalyzes the conversion of gentisate (2,5-dihydroxybenzoate) to maleylpyruvate. Exhibits broad substrate specificities towards alkyl and halogenated gentisates. In Aquipseudomonas alcaligenes (Pseudomonas alcaligenes), this protein is Gentisate 1,2 dioxygenase 1.